The sequence spans 541 residues: Probable elastin-binding protein EbpS (541 aa).

Basic and acidic residues-rich tracts occupy residues M1–N25, D35–F49, and R61–N108. Disordered stretches follow at residues M1–G322 and M346–T493. Residues D109–S126 show a composition bias toward polar residues. Positions E127 to N145 are enriched in basic and acidic residues. Low complexity predominate over residues K146–S165. Over residues K166–H182 the composition is skewed to basic and acidic residues. Residues Q183–T198 are compositionally biased toward polar residues. Residues A215–A231 are compositionally biased toward low complexity. A compositionally biased stretch (basic and acidic residues) spans D239–H260. The span at A267–T290 shows a compositional bias: low complexity. Over residues G291–N305 the composition is skewed to gly residues. A compositionally biased stretch (basic and acidic residues) spans N309–K318. A helical membrane pass occupies residues L327–A347. A compositionally biased stretch (basic and acidic residues) spans N352–D396. Positions N398–Q491 are enriched in low complexity. A LysM domain is found at Q491–I539.

It localises to the cell membrane. The protein is Probable elastin-binding protein EbpS (ebpS) of Staphylococcus saprophyticus subsp. saprophyticus (strain ATCC 15305 / DSM 20229 / NCIMB 8711 / NCTC 7292 / S-41).